A 318-amino-acid chain; its full sequence is L-lactate dehydrogenase (318 aa).

Residues Val-17, Asp-38, Lys-43, Tyr-69, and 83–84 (GA) each bind NAD(+). Residues Gln-86 and Arg-92 each contribute to the substrate site. Residues Ser-105, 122-124 (ATN), and Ser-147 each bind NAD(+). 124 to 127 (NPVD) serves as a coordination point for substrate. 152–155 (DTAR) serves as a coordination point for substrate. The beta-D-fructose 1,6-bisphosphate site is built by Lys-157 and His-172. His-179 serves as the catalytic Proton acceptor. Position 223 is a phosphotyrosine (Tyr-223). Thr-232 is a binding site for substrate.

The protein belongs to the LDH/MDH superfamily. LDH family. In terms of assembly, homotetramer.

Its subcellular location is the cytoplasm. The catalysed reaction is (S)-lactate + NAD(+) = pyruvate + NADH + H(+). It participates in fermentation; pyruvate fermentation to lactate; (S)-lactate from pyruvate: step 1/1. Its activity is regulated as follows. Allosterically activated by fructose 1,6-bisphosphate (FBP). Functionally, catalyzes the conversion of lactate to pyruvate. In Staphylococcus saprophyticus subsp. saprophyticus (strain ATCC 15305 / DSM 20229 / NCIMB 8711 / NCTC 7292 / S-41), this protein is L-lactate dehydrogenase.